The following is a 130-amino-acid chain: MIGNWNYGTGRRKSAVARVFIKAGKGDIVVNGKPIADYFSRETSLMIVRQPLELTNHGVTFDIKVNVTGGGETGQAGAVRHGITRALMDYDATLKPELSKAGFVTRDAREVERKKVGFHKARRRKQFSKR.

Belongs to the universal ribosomal protein uS9 family.

This Paraburkholderia phytofirmans (strain DSM 17436 / LMG 22146 / PsJN) (Burkholderia phytofirmans) protein is Small ribosomal subunit protein uS9.